The sequence spans 482 residues: Glutamyl-tRNA(Gln) amidotransferase subunit A (482 aa).

Catalysis depends on charge relay system residues lysine 75 and serine 150. The active-site Acyl-ester intermediate is serine 174.

It belongs to the amidase family. GatA subfamily. Heterotrimer of A, B and C subunits.

It carries out the reaction L-glutamyl-tRNA(Gln) + L-glutamine + ATP + H2O = L-glutaminyl-tRNA(Gln) + L-glutamate + ADP + phosphate + H(+). In terms of biological role, allows the formation of correctly charged Gln-tRNA(Gln) through the transamidation of misacylated Glu-tRNA(Gln) in organisms which lack glutaminyl-tRNA synthetase. The reaction takes place in the presence of glutamine and ATP through an activated gamma-phospho-Glu-tRNA(Gln). This is Glutamyl-tRNA(Gln) amidotransferase subunit A from Rippkaea orientalis (strain PCC 8801 / RF-1) (Cyanothece sp. (strain PCC 8801)).